We begin with the raw amino-acid sequence, 307 residues long: DNA damage tolerance protein rad31 (307 aa).

Functionally, could be involved in a ubiquitin-related process important for DNA damage tolerance. Acts in a process which is defective in the checkpoint rad mutants and which involves hus5. This Schizosaccharomyces pombe (strain 972 / ATCC 24843) (Fission yeast) protein is DNA damage tolerance protein rad31 (rad31).